The primary structure comprises 363 residues: Protein U2 (363 aa).

Residues 1 to 18 (MFCRSPFLGISSWSLASA) form the signal peptide.

In Homo sapiens (Human), this protein is Protein U2 (U2).